Consider the following 1100-residue polypeptide: Isoleucine--tRNA ligase (1100 aa).

The 'HIGH' region signature appears at 48-58; sequence PFATGLPHFGH. The 'KMSKS' region signature appears at 626 to 630; that stretch reads KMSKS. Residue K629 participates in ATP binding.

Belongs to the class-I aminoacyl-tRNA synthetase family. IleS type 2 subfamily. Monomer. Zn(2+) serves as cofactor.

The protein localises to the cytoplasm. The enzyme catalyses tRNA(Ile) + L-isoleucine + ATP = L-isoleucyl-tRNA(Ile) + AMP + diphosphate. In terms of biological role, catalyzes the attachment of isoleucine to tRNA(Ile). As IleRS can inadvertently accommodate and process structurally similar amino acids such as valine, to avoid such errors it has two additional distinct tRNA(Ile)-dependent editing activities. One activity is designated as 'pretransfer' editing and involves the hydrolysis of activated Val-AMP. The other activity is designated 'posttransfer' editing and involves deacylation of mischarged Val-tRNA(Ile). This Treponema denticola (strain ATCC 35405 / DSM 14222 / CIP 103919 / JCM 8153 / KCTC 15104) protein is Isoleucine--tRNA ligase.